We begin with the raw amino-acid sequence, 218 residues long: Ras-related protein Rab-4A (218 aa).

Residues G23, T24, G25, K26, S27, C28, S42, H44, and T45 each contribute to the GTP site. S27 is a Mg(2+) binding site. Positions 44–49 (HTIGVE) match the Switch 1 motif. Mg(2+) is bound by residues T45 and D68. The Switch 2 motif lies at 70–79 (AGQERFRSVT). G71 provides a ligand contact to GTP. Q72 carries the post-translational modification 5-glutamyl serotonin. GTP contacts are provided by N126, K127, D129, A157, and L158. S190 is modified (phosphoserine). S204 carries the phosphoserine; by CDK1 modification. 2 S-geranylgeranyl cysteine lipidation sites follow: C216 and C218. Residue C218 is modified to Cysteine methyl ester.

It belongs to the small GTPase superfamily. Rab family. Interacts with SGSM1, SGSM2 and SGSM3. Interacts with RAB11FIP1, RABEP1, ZFYVE20 and RUFY1. Interacts (membrane-bound form) with NDRG1; the interaction involves NDRG1 in vesicular recycling of E-cadherin. Interacts (in GTP-bound form) with GRIPAP1 (via N-terminus). Interacts with RABEP1 and RBSN. Does not interact with HPS4. Does not interact with HPS4. Interacts with RABEP2; this interaction may mediate VEGFR2 cell surface expression. The cofactor is Mg(2+). In terms of processing, serotonylation of Gln-72 by TGM2 during activation and aggregation of platelets leads to constitutive activation of GTPase activity. Phosphorylated by CDK1 kinase during mitosis. As to expression, expressed in the central nervous system, including cortex, cerebellum, midbrain and spinal cord, and in the kidney, lung, liver and spleen.

The protein localises to the membrane. The protein resides in the cytoplasm. It localises to the early endosome membrane. Its subcellular location is the recycling endosome membrane. The catalysed reaction is GTP + H2O = GDP + phosphate + H(+). Its activity is regulated as follows. Regulated by guanine nucleotide exchange factors (GEFs) which promote the exchange of bound GDP for free GTP. Regulated by GTPase activating proteins (GAPs) which increase the GTP hydrolysis activity. Inhibited by GDP dissociation inhibitors (GDIs). The small GTPases Rab are key regulators of intracellular membrane trafficking, from the formation of transport vesicles to their fusion with membranes. Rabs cycle between an inactive GDP-bound form and an active GTP-bound form that is able to recruit to membranes different sets of downstream effectors directly responsible for vesicle formation, movement, tethering and fusion. RAB4A is involved in protein transport. Also plays a role in vesicular traffic. Mediates VEGFR2 endosomal trafficking to enhance VEGFR2 signaling. Acts as a regulator of platelet alpha-granule release during activation and aggregation of platelets. The chain is Ras-related protein Rab-4A from Mus musculus (Mouse).